Reading from the N-terminus, the 361-residue chain is Peptide chain release factor 1 (361 aa).

At Q235 the chain carries N5-methylglutamine. The interval 283–306 is disordered; it reads RSQQATAEAMTRKLQVGSGDRSQR.

It belongs to the prokaryotic/mitochondrial release factor family. In terms of processing, methylated by PrmC. Methylation increases the termination efficiency of RF1.

The protein localises to the cytoplasm. Peptide chain release factor 1 directs the termination of translation in response to the peptide chain termination codons UAG and UAA. The chain is Peptide chain release factor 1 from Xylella fastidiosa (strain M23).